Reading from the N-terminus, the 696-residue chain is C2 domain-containing protein 2 (696 aa).

The helical transmembrane segment at 8–28 threads the bilayer; the sequence is VQWLFLVSLFVAALGTVGLYL. The SMP-LBD domain occupies 45-238; sequence EPDELRRRES…PTQVKEAQSL (194 aa). Residue serine 54 is modified to Phosphoserine. A C2 domain is found at 241-357; it reads PSSTAQEPCP…RKQPNGPQTF (117 aa). Serine 436 carries the post-translational modification Phosphoserine. Threonine 440 is modified (phosphothreonine). A disordered region spans residues 551–611; that stretch reads ATEASATTPP…DGDELSESSL (61 aa). The segment covering 573 to 588 has biased composition (basic and acidic residues); that stretch reads KPRENDLDSWELEKES. A Phosphoserine modification is found at serine 581.

The protein localises to the membrane. The polypeptide is C2 domain-containing protein 2 (Mus musculus (Mouse)).